The chain runs to 406 residues: Haptoglobin (406 aa).

An N-terminal signal peptide occupies residues 1–18; it reads MSALGAVIALLLWGQLFA. Sushi domains are found at residues 31-88 and 90-147; these read DGCP…ECEA. Cystine bridges form between Cys-52-Cys-86, Cys-111-Cys-145, Cys-149-Cys-266, Cys-309-Cys-340, and Cys-351-Cys-381. Residues 162–404 enclose the Peptidase S1 domain; it reads ILGGHLDAKG…IQDWVQKTIA (243 aa). N-linked (GlcNAc...) (complex) asparagine glycosylation occurs at Asn-184. N-linked (GlcNAc...) asparagine glycosylation is found at Asn-207 and Asn-211. Asn-241 carries an N-linked (GlcNAc...) (complex) asparagine glycan. The segment at 318–323 is interaction with CD163; the sequence is VPEKKT.

Belongs to the peptidase S1 family. In terms of assembly, tetramer of two alpha and two beta chains; disulfide-linked. The hemoglobin/haptoglobin complex is composed of a haptoglobin dimer bound to two hemoglobin alpha-beta dimers. Interacts with CD163. Interacts with ERGIC3. In terms of tissue distribution, expressed by the liver and secreted in plasma.

It localises to the secreted. In terms of biological role, as a result of hemolysis, hemoglobin is found to accumulate in the kidney and is secreted in the urine. Haptoglobin captures, and combines with free plasma hemoglobin to allow hepatic recycling of heme iron and to prevent kidney damage. Haptoglobin also acts as an antioxidant, has antibacterial activity, and plays a role in modulating many aspects of the acute phase response. Hemoglobin/haptoglobin complexes are rapidly cleared by the macrophage CD163 scavenger receptor expressed on the surface of liver Kupfer cells through an endocytic lysosomal degradation pathway. Its function is as follows. The uncleaved form of allele alpha-2 (2-2), known as zonulin, plays a role in intestinal permeability, allowing intercellular tight junction disassembly, and controlling the equilibrium between tolerance and immunity to non-self antigens. This chain is Haptoglobin (HP), found in Homo sapiens (Human).